The following is a 188-amino-acid chain: Adenine phosphoribosyltransferase (188 aa).

Belongs to the purine/pyrimidine phosphoribosyltransferase family. Homodimer.

The protein resides in the cytoplasm. The enzyme catalyses AMP + diphosphate = 5-phospho-alpha-D-ribose 1-diphosphate + adenine. The protein operates within purine metabolism; AMP biosynthesis via salvage pathway; AMP from adenine: step 1/1. Its function is as follows. Catalyzes a salvage reaction resulting in the formation of AMP, that is energically less costly than de novo synthesis. This chain is Adenine phosphoribosyltransferase, found in Burkholderia vietnamiensis (strain G4 / LMG 22486) (Burkholderia cepacia (strain R1808)).